The sequence spans 230 residues: Large ribosomal subunit protein uL1 (230 aa).

This sequence belongs to the universal ribosomal protein uL1 family. In terms of assembly, part of the 50S ribosomal subunit.

Its function is as follows. Binds directly to 23S rRNA. The L1 stalk is quite mobile in the ribosome, and is involved in E site tRNA release. Functionally, protein L1 is also a translational repressor protein, it controls the translation of the L11 operon by binding to its mRNA. This is Large ribosomal subunit protein uL1 from Bacillus mycoides (strain KBAB4) (Bacillus weihenstephanensis).